The chain runs to 109 residues: MSAQPVDIQIFGRSLRVNCPPEQRDALNQAADELNQRLQDLKVRTRVTNTEQLVFIAALNICYELAQEKVKTRDYAANMEQRIRMLQQTIEQALLEQGRISERAEPKFE.

Positions 21 to 99 form a coiled coil; sequence PEQRDALNQA…IEQALLEQGR (79 aa).

Belongs to the ZapA family. Type 1 subfamily. Homodimer. Interacts with FtsZ.

The protein resides in the cytoplasm. Activator of cell division through the inhibition of FtsZ GTPase activity, therefore promoting FtsZ assembly into bundles of protofilaments necessary for the formation of the division Z ring. It is recruited early at mid-cell but it is not essential for cell division. In Cronobacter sakazakii (strain ATCC BAA-894) (Enterobacter sakazakii), this protein is Cell division protein ZapA.